Here is a 208-residue protein sequence, read N- to C-terminus: Glutathione S-transferase (208 aa).

In terms of domain architecture, GST N-terminal spans 1 to 78; sequence MSYKLTYFPI…HLARKFNLNG (78 aa). Residues Tyr-7, Lys-42, 49 to 50, and 62 to 63 contribute to the glutathione site; these read QL and QS. Residues 80–200 enclose the GST C-terminal domain; the sequence is NNAETSYVDM…YCAKRNASKM (121 aa).

It belongs to the GST superfamily. Pi family. Homodimer.

The enzyme catalyses RX + glutathione = an S-substituted glutathione + a halide anion + H(+). Functionally, conjugation of reduced glutathione to a wide number of exogenous and endogenous hydrophobic electrophiles. The polypeptide is Glutathione S-transferase (Dirofilaria immitis (Canine heartworm)).